A 336-amino-acid chain; its full sequence is Cell division protein ZipA (336 aa).

Residues 1–2 are Periplasmic-facing; the sequence is ME. Residues 3–23 form a helical membrane-spanning segment; it reads LHILFFILAGLLIAVLIGFSL. The Cytoplasmic portion of the chain corresponds to 24-336; sequence WSARREKSRI…SRQAYLARVS (313 aa).

It belongs to the ZipA family. Interacts with FtsZ via their C-terminal domains.

The protein localises to the cell inner membrane. In terms of biological role, essential cell division protein that stabilizes the FtsZ protofilaments by cross-linking them and that serves as a cytoplasmic membrane anchor for the Z ring. Also required for the recruitment to the septal ring of downstream cell division proteins. The polypeptide is Cell division protein ZipA (Actinobacillus pleuropneumoniae serotype 5b (strain L20)).